Consider the following 278-residue polypeptide: Shikimate dehydrogenase (NADP(+)) (278 aa).

Residues 18–20 and T65 contribute to the shikimate site; that span reads SRS. K69 acts as the Proton acceptor in catalysis. E80 is a binding site for NADP(+). N89 and D104 together coordinate shikimate. NADP(+) is bound by residues 129–133 and L218; that span reads GAGGS. Shikimate is bound at residue Y220. G241 serves as a coordination point for NADP(+).

It belongs to the shikimate dehydrogenase family. As to quaternary structure, homodimer.

The enzyme catalyses shikimate + NADP(+) = 3-dehydroshikimate + NADPH + H(+). It functions in the pathway metabolic intermediate biosynthesis; chorismate biosynthesis; chorismate from D-erythrose 4-phosphate and phosphoenolpyruvate: step 4/7. Its function is as follows. Involved in the biosynthesis of the chorismate, which leads to the biosynthesis of aromatic amino acids. Catalyzes the reversible NADPH linked reduction of 3-dehydroshikimate (DHSA) to yield shikimate (SA). This Rhodopseudomonas palustris (strain TIE-1) protein is Shikimate dehydrogenase (NADP(+)).